Here is a 231-residue protein sequence, read N- to C-terminus: Thiamine import ATP-binding protein ThiQ (231 aa).

In terms of domain architecture, ABC transporter spans 2-230 (LHLDRLLIRQ…PPPALRAYLG (229 aa)). 32 to 39 (GPSGGGKS) lines the ATP pocket.

This sequence belongs to the ABC transporter superfamily. Thiamine importer (TC 3.A.1.19.1) family. As to quaternary structure, the complex is composed of two ATP-binding proteins (ThiQ), two transmembrane proteins (ThiP) and a solute-binding protein (ThiB).

The protein localises to the cell inner membrane. It catalyses the reaction thiamine(out) + ATP + H2O = thiamine(in) + ADP + phosphate + H(+). Its function is as follows. Part of the ABC transporter complex ThiBPQ involved in thiamine import. Responsible for energy coupling to the transport system. This Cereibacter sphaeroides (strain ATCC 17023 / DSM 158 / JCM 6121 / CCUG 31486 / LMG 2827 / NBRC 12203 / NCIMB 8253 / ATH 2.4.1.) (Rhodobacter sphaeroides) protein is Thiamine import ATP-binding protein ThiQ.